We begin with the raw amino-acid sequence, 123 residues long: Protein Wnt-7a (123 aa).

A lipid anchor (O-palmitoleoyl serine; by PORCN) is attached at S1. The tract at residues 33–61 is disordered linker; sequence VEPVRTHRNKRPVFLKIKKPLSYRKPMVT. C89 and C104 are disulfide-bonded. N-linked (GlcNAc...) asparagine glycans are attached at residues N90 and N96.

The protein belongs to the Wnt family. In terms of assembly, forms a soluble 1:1 complex with AFM; this prevents oligomerization and is required for prolonged biological activity. The complex with AFM may represent the physiological form in body fluids. Interacts with FZD5. Interacts with PORCN. Palmitoleoylation is required for efficient binding to frizzled receptors. Depalmitoleoylation leads to Wnt signaling pathway inhibition.

The protein resides in the secreted. It is found in the extracellular space. Its subcellular location is the extracellular matrix. Its function is as follows. Ligand for members of the frizzled family of seven transmembrane receptors that functions in the canonical Wnt/beta-catenin signaling pathway. Plays an important role in embryonic development, including dorsal versus ventral patterning during limb development, skeleton development and urogenital tract development. Required for central nervous system (CNS) angiogenesis and blood-brain barrier regulation. In Alopias vulpinus (Common thresher shark), this protein is Protein Wnt-7a (WNT-7A).